Reading from the N-terminus, the 203-residue chain is Cupin-domain-containing oxidoreductase fogC (203 aa).

The tract at residues 105-171 (DFAPGVESPL…GNGTLPGRML (67 aa)) is cupin-like domain.

It belongs to the virC family.

Its pathway is secondary metabolite biosynthesis. In terms of biological role, cupin-domain-containing oxidoreductase; part of the gene cluster that mediates the biosynthesis of flavoglaucin and congeners (including aspergin, dihydroauroglaucin and auroglaucin), prenylated salicylaldehyde derivatives carrying a saturated or an unsaturated C-7 side chain. The PKS fogA releases the carboxylic acid (8E,10E,12E)-3,5,7-trihydroxytetradeca-8,10,12-trienoic acid as its product, as well as derivatives with one and two double bonds. FogA is indeed able to reduce the initial triketide, thus being at least partially responsible for the differently saturated heptyl side chains of flavoglaucin congeners. The oxidoreductases fogB, fogC and fogD modify the nascent polyketide in fogA-bound form and, together, fogA, fogB, fogC and fogD are necessary for the formation of the aromatic core and the cyclized PKS products are released as salicyl alcohols. In particular, fogB is responsible for oxidation of a hydroxyl group or reduction of remaining double bond(s) at the C-7 residue whereas fogD is probably involved in the reductive release of the modified PKS products. The cytochrome P450 monooxygenase fogE is then responsible for the hydroxylation at C-3 of the benzene ring. The fogE products are substrates of the prenyltransferase fogH and the prenylated benzyl alcohols are subsequently oxidized by the fogF to produce the final aryl aldehydes flavoglaucin and congeners. The short-chain dehydrogenase fogG does not seem to be involved in the biosynthesis of the prenylated salicylaldehyde derivatives. The sequence is that of Cupin-domain-containing oxidoreductase fogC from Aspergillus ruber (strain CBS 135680).